The sequence spans 343 residues: Protein RecA (343 aa).

Glycine 64–threonine 71 provides a ligand contact to ATP.

Belongs to the RecA family.

It localises to the cytoplasm. Functionally, can catalyze the hydrolysis of ATP in the presence of single-stranded DNA, the ATP-dependent uptake of single-stranded DNA by duplex DNA, and the ATP-dependent hybridization of homologous single-stranded DNAs. It interacts with LexA causing its activation and leading to its autocatalytic cleavage. The sequence is that of Protein RecA from Acidiphilium cryptum (strain JF-5).